The chain runs to 175 residues: Crossover junction endodeoxyribonuclease RuvC (175 aa).

Active-site residues include Asp8, Glu67, and Asp139. Positions 8, 67, and 139 each coordinate Mg(2+).

This sequence belongs to the RuvC family. Homodimer which binds Holliday junction (HJ) DNA. The HJ becomes 2-fold symmetrical on binding to RuvC with unstacked arms; it has a different conformation from HJ DNA in complex with RuvA. In the full resolvosome a probable DNA-RuvA(4)-RuvB(12)-RuvC(2) complex forms which resolves the HJ. Mg(2+) serves as cofactor.

It is found in the cytoplasm. The enzyme catalyses Endonucleolytic cleavage at a junction such as a reciprocal single-stranded crossover between two homologous DNA duplexes (Holliday junction).. The RuvA-RuvB-RuvC complex processes Holliday junction (HJ) DNA during genetic recombination and DNA repair. Endonuclease that resolves HJ intermediates. Cleaves cruciform DNA by making single-stranded nicks across the HJ at symmetrical positions within the homologous arms, yielding a 5'-phosphate and a 3'-hydroxyl group; requires a central core of homology in the junction. The consensus cleavage sequence is 5'-(A/T)TT(C/G)-3'. Cleavage occurs on the 3'-side of the TT dinucleotide at the point of strand exchange. HJ branch migration catalyzed by RuvA-RuvB allows RuvC to scan DNA until it finds its consensus sequence, where it cleaves and resolves the cruciform DNA. The sequence is that of Crossover junction endodeoxyribonuclease RuvC from Marinobacter nauticus (strain ATCC 700491 / DSM 11845 / VT8) (Marinobacter aquaeolei).